The sequence spans 206 residues: Alpha-1-acid glycoprotein 3 (206 aa).

Positions 1–18 are cleaved as a signal peptide; that stretch reads MELHTVLIMLSLLPLLEA. N-linked (GlcNAc...) asparagine glycans are attached at residues Asn33, Asn75, and Asn103. An intrachain disulfide couples Cys90 to Cys183. A disordered region spans residues 187 to 206; that stretch reads EKKHLELEKETKKDPEESQA.

Belongs to the calycin superfamily. Lipocalin family.

The protein localises to the secreted. In terms of biological role, functions as a transport protein in the blood stream. Binds various ligands in the interior of its beta-barrel domain. Appears to function in modulating the activity of the immune system during the acute-phase reaction. This chain is Alpha-1-acid glycoprotein 3 (Orm3), found in Mus musculus (Mouse).